Reading from the N-terminus, the 454-residue chain is Transmembrane protein adipocyte-associated 1 homolog (454 aa).

Residues asparagine 26 and asparagine 44 are each glycosylated (N-linked (GlcNAc...) asparagine). 5 consecutive transmembrane segments (helical) span residues 80–100 (AILIPNLLFLLFLFLKCTSVI), 113–133 (AFTLLVYVSTLVNIIRCVYSM), 151–171 (IIIKFFYLTAEFCALTFGLLF), 180–200 (ILIALLGTLLVSIPHTAVQVI), and 224–244 (FVFWVLSSATLALVYFFIMCL). The N-linked (GlcNAc...) asparagine glycan is linked to asparagine 258. 2 consecutive transmembrane segments (helical) span residues 262-282 (FIYCMMMVTLNILQSMGAALI) and 290-310 (LCFVGVSTYVYFVLYPPIIYF). Asparagine 322 and asparagine 323 each carry an N-linked (GlcNAc...) asparagine glycan. Residues 408–454 (RTGSDDFAHHRDSMLSEPSTGTTTRHLKGLGPQGSLVFEEDPSSLRL) form a disordered region. Residues 410-421 (GSDDFAHHRDSM) show a composition bias toward basic and acidic residues. Residues 445 to 454 (FEEDPSSLRL) show a composition bias toward acidic residues.

It belongs to the UPF0359 family.

The protein resides in the membrane. The chain is Transmembrane protein adipocyte-associated 1 homolog (tpra-1) from Caenorhabditis briggsae.